The following is a 289-amino-acid chain: UPF0276 protein BPP1075 (289 aa).

Belongs to the UPF0276 family.

The chain is UPF0276 protein BPP1075 from Bordetella parapertussis (strain 12822 / ATCC BAA-587 / NCTC 13253).